The chain runs to 666 residues: Putative L-type lectin-domain containing receptor kinase V.1 (666 aa).

An N-terminal signal peptide occupies residues 1–18 (MVLLLFLVLFFVPESVVC). Residues 19–289 (QRPNPNGVEF…WIQSPNGILT (271 aa)) are Extracellular-facing. Positions 27 to 257 (EFNTSGNMYT…SHYILGWTFK (231 aa)) are legume-lectin like. 6 N-linked (GlcNAc...) asparagine glycosylation sites follow: Asn29, Asn74, Asn123, Asn176, Asn204, and Asn259. Residues 290–310 (ISLTVSGVIILIILSLSLWLF) form a helical membrane-spanning segment. Topologically, residues 311-666 (LKRKKLLEVL…FTESFVSHGR (356 aa)) are cytoplasmic. The 282-residue stretch at 344–625 (FKDTEVLGKG…SVAQLPHNLL (282 aa)) folds into the Protein kinase domain. ATP-binding positions include 350–358 (LGKGGFGKV) and Lys373. Asp469 serves as the catalytic Proton acceptor.

This sequence in the C-terminal section; belongs to the protein kinase superfamily. Ser/Thr protein kinase family. It in the N-terminal section; belongs to the leguminous lectin family.

It localises to the cell membrane. The catalysed reaction is L-seryl-[protein] + ATP = O-phospho-L-seryl-[protein] + ADP + H(+). The enzyme catalyses L-threonyl-[protein] + ATP = O-phospho-L-threonyl-[protein] + ADP + H(+). This is Putative L-type lectin-domain containing receptor kinase V.1 (LECRK51) from Arabidopsis thaliana (Mouse-ear cress).